A 158-amino-acid polypeptide reads, in one-letter code: Transcription elongation factor GreA (158 aa).

Residues 45-72 (AEYHAAREQQSFIEGRIKQLEGELSHAE) are a coiled coil.

Belongs to the GreA/GreB family.

Necessary for efficient RNA polymerase transcription elongation past template-encoded arresting sites. The arresting sites in DNA have the property of trapping a certain fraction of elongating RNA polymerases that pass through, resulting in locked ternary complexes. Cleavage of the nascent transcript by cleavage factors such as GreA or GreB allows the resumption of elongation from the new 3'terminus. GreA releases sequences of 2 to 3 nucleotides. This is Transcription elongation factor GreA from Xylella fastidiosa (strain 9a5c).